We begin with the raw amino-acid sequence, 251 residues long: N-acetylmuramoyl-L-alanine amidase CwlA (251 aa).

Residues 1–37 (MEIKQMLVPVSRYSVLCPYEMNPTEITFHNTYNDAPA) form the signal peptide. One can recognise an N-acetylmuramoyl-L-alanine amidase domain in the interval 38-140 (INERNNVANN…QERNGKYCPH (103 aa)).

This sequence belongs to the N-acetylmuramoyl-L-alanine amidase 2 family.

It localises to the secreted. It catalyses the reaction Hydrolyzes the link between N-acetylmuramoyl residues and L-amino acid residues in certain cell-wall glycopeptides.. Its function is as follows. Autolysins are involved in some important biological processes such as cell separation, cell-wall turnover, competence for genetic transformation, formation of the flagella and sporulation. This Bacillus sp protein is N-acetylmuramoyl-L-alanine amidase CwlA (cwlA).